The chain runs to 755 residues: MARKLSVILILTFALSVTNPLHELKAAAFPQTTEKISPNWESGINVDLAISTRQYHLQQLFYRYGENNSLSVEGFRKLLQNIGIDKIKRIHIHHDHDHHSDHEHHSDHERHSDHEHHSEHEHHSDHDHHSHHNHAASGKNKRKALCPDHDSDSSGKDPRNSQGKGAHRPEHASGRRNVKDSVSASEVTSTVYNTVSEGTHFLETIETPRPGKLFPKDVSSSTPPSVTSKSRVSRLAGRKTNESVSEPRKGFMYSRNTNENPQECFNASKLLTSHGMGIQVPLNATEFNYLCPAIINQIDARSCLIHTSEKKAEIPPKTYSLQIAWVGGFIAISIISFLSLLGVILVPLMNRVFFKFLLSFLVALAVGTLSGDAFLHLLPHSHASHHHSHSHEEPAMEMKRGPLFSHLSSQNIEESAYFDSTWKGLTALGGLYFMFLVEHVLTLIKQFKDKKKKNQKKPENDDDVEIKKQLSKYESQLSTNEEKVDTDDRTEGYLRADSQEPSHFDSQQPAVLEEEEVMIAHAHPQEVYNEYVPRGCKNKCHSHFHDTLGQSDDLIHHHHDYHHILHHHHHQNHHPHSHSQRYSREELKDAGVATLAWMVIMGDGLHNFSDGLAIGAAFTEGLSSGLSTSVAVFCHELPHELGDFAVLLKAGMTVKQAVLYNALSAMLAYLGMATGIFIGHYAENVSMWIFALTAGLFMYVALVDMVPEMLHNDASDHGCSRWGYFFLQNAGMLLGFGIMLLISIFEHKIVFRINF.

An N-terminal signal peptide occupies residues 1–28; sequence MARKLSVILILTFALSVTNPLHELKAAA. Residues 29–325 lie on the Extracellular side of the membrane; it reads FPQTTEKISP…PKTYSLQIAW (297 aa). N-linked (GlcNAc...) asparagine glycosylation is present at asparagine 67. A compositionally biased stretch (basic and acidic residues) spans 95-128; the sequence is DHDHHSDHEHHSDHERHSDHEHHSEHEHHSDHDH. Disordered stretches follow at residues 95–186 and 202–246; these read DHDH…SASE and LETI…SVSE. Residues 129 to 144 show a composition bias toward basic residues; that stretch reads HSHHNHAASGKNKRKA. Composition is skewed to basic and acidic residues over residues 145 to 159 and 167 to 179; these read LCPD…KDPR and HRPE…RNVK. Residues 219–234 show a composition bias toward low complexity; it reads SSSTPPSVTSKSRVSR. N-linked (GlcNAc...) asparagine glycosylation is found at asparagine 241, asparagine 266, and asparagine 283. A helical transmembrane segment spans residues 326–346; sequence VGGFIAISIISFLSLLGVILV. Topologically, residues 347 to 355 are cytoplasmic; it reads PLMNRVFFK. Residues 356 to 376 form a helical membrane-spanning segment; the sequence is FLLSFLVALAVGTLSGDAFLH. The Extracellular portion of the chain corresponds to 377-423; sequence LLPHSHASHHHSHSHEEPAMEMKRGPLFSHLSSQNIEESAYFDSTWK. The helical transmembrane segment at 424-444 threads the bilayer; that stretch reads GLTALGGLYFMFLVEHVLTLI. The Cytoplasmic segment spans residues 445–657; sequence KQFKDKKKKN…LKAGMTVKQA (213 aa). The stretch at 464 to 480 forms a coiled coil; the sequence is VEIKKQLSKYESQLSTN. Serine 471 and serine 478 each carry phosphoserine. A helical transmembrane segment spans residues 658-678; the sequence is VLYNALSAMLAYLGMATGIFI. The Extracellular segment spans residues 679 to 686; sequence GHYAENVS. N-linked (GlcNAc...) asparagine glycosylation occurs at asparagine 684. A helical transmembrane segment spans residues 687–707; it reads MWIFALTAGLFMYVALVDMVP. The Cytoplasmic portion of the chain corresponds to 708–724; the sequence is EMLHNDASDHGCSRWGY. Residues 725-745 traverse the membrane as a helical segment; that stretch reads FFLQNAGMLLGFGIMLLISIF. Over 746-755 the chain is Extracellular; that stretch reads EHKIVFRINF.

The protein belongs to the ZIP transporter (TC 2.A.5) family. In terms of assembly, interacts with SLC39A10; which triggers cells to undergo EMT and mitosis. Found in a complex with SLC39A6, SLC39A10 and with the 'Ser-727' phosphorylated form of STAT3 throughout mitosis. Found in a complex with SLC39A6, SLC39A10 and with NCAM1; this complex controls NCAM1 phosphorylation and integration into focal adhesion complexes during epithelial-to-mesenchymal transition (EMT). Found in a complex with SLC39A6, SLC39A10 and with GSK3B that controls NCAM1 phosphorylation. Cleaved on the N-terminus before locating to the plasma membrane. Post-translationally, N-glycosylated. In terms of processing, phosphorylated by ZAP70 in response to TCR stimulation leading to its activation. In terms of tissue distribution, highly expressed in the breast, prostate, placenta, kidney, pituitary and corpus callosum. Weakly expressed in heart and intestine. Also highly expressed in cells derived from an adenocarcinoma of the cervix and lung carcinoma.

The protein resides in the cell membrane. Its subcellular location is the cell projection. It localises to the lamellipodium membrane. It is found in the membrane raft. The protein localises to the apical cell membrane. The catalysed reaction is Zn(2+)(in) = Zn(2+)(out). Functionally, zinc-influx transporter which plays a role in zinc homeostasis and in the induction of epithelial-to-mesenchymal transition (EMT). When associated with SLC39A10, the heterodimer formed by SLC39A10 and SLC39A6 mediates cellular zinc uptake to trigger cells to undergo epithelial- to-mesenchymal transition (EMT). The SLC39A10-SLC39A6 heterodimer also controls NCAM1 phosphorylation and its integration into focal adhesion complexes during EMT. Zinc influx inactivates GSK3B, enabling unphosphorylated SNAI1 in the nucleus to down-regulate adherence genes such as CDH1, causing loss of cell adherence. In addition, the SLC39A10-SLC39A6 heterodimer plays an essentiel role in initiating mitosis by importing zinc into cells to initiate a pathway resulting in the onset of mitosis. Participates in the T-cell receptor signaling regulation by mediating cellular zinc uptake into activated lymphocytes. Regulates the zinc influx necessary for proper meiotic progression to metaphase II (MII) that allows the oocyte-to-egg transition. This Homo sapiens (Human) protein is Zinc transporter ZIP6.